The chain runs to 132 residues: Small ribosomal subunit protein uS9 (132 aa).

Belongs to the universal ribosomal protein uS9 family.

This Leptospira interrogans serogroup Icterohaemorrhagiae serovar copenhageni (strain Fiocruz L1-130) protein is Small ribosomal subunit protein uS9.